Reading from the N-terminus, the 148-residue chain is ATP synthase epsilon chain (148 aa).

Belongs to the ATPase epsilon chain family. As to quaternary structure, F-type ATPases have 2 components, CF(1) - the catalytic core - and CF(0) - the membrane proton channel. CF(1) has five subunits: alpha(3), beta(3), gamma(1), delta(1), epsilon(1). CF(0) has three main subunits: a, b and c.

The protein localises to the cell membrane. Its function is as follows. Produces ATP from ADP in the presence of a proton gradient across the membrane. In Streptococcus thermophilus (strain ATCC BAA-250 / LMG 18311), this protein is ATP synthase epsilon chain.